We begin with the raw amino-acid sequence, 304 residues long: Homoserine O-acetyltransferase (304 aa).

The Acyl-thioester intermediate role is filled by cysteine 142. Residues lysine 163 and serine 191 each contribute to the substrate site. Histidine 234 serves as the catalytic Proton acceptor. Glutamate 236 is an active-site residue. Arginine 248 contributes to the substrate binding site.

The protein belongs to the MetA family.

The protein resides in the cytoplasm. It catalyses the reaction L-homoserine + acetyl-CoA = O-acetyl-L-homoserine + CoA. It functions in the pathway amino-acid biosynthesis; L-methionine biosynthesis via de novo pathway; O-acetyl-L-homoserine from L-homoserine: step 1/1. Its function is as follows. Transfers an acetyl group from acetyl-CoA to L-homoserine, forming acetyl-L-homoserine. This is Homoserine O-acetyltransferase from Thermotoga neapolitana (strain ATCC 49049 / DSM 4359 / NBRC 107923 / NS-E).